The chain runs to 57 residues: Large ribosomal subunit protein bL32 (57 aa).

Positions 1–19 (MATPKRRMSRANTRSRRAQ) are enriched in basic residues. The segment at 1–20 (MATPKRRMSRANTRSRRAQW) is disordered.

It belongs to the bacterial ribosomal protein bL32 family.

This is Large ribosomal subunit protein bL32 from Mycobacterium leprae (strain Br4923).